The sequence spans 193 residues: Potassium-transporting ATPase KdpC subunit (193 aa).

The helical transmembrane segment at 14–34 threads the bilayer; that stretch reads ITFTFLVLCGLVYPLIVTGIA.

The protein belongs to the KdpC family. The system is composed of three essential subunits: KdpA, KdpB and KdpC.

The protein localises to the cell membrane. Its function is as follows. Part of the high-affinity ATP-driven potassium transport (or Kdp) system, which catalyzes the hydrolysis of ATP coupled with the electrogenic transport of potassium into the cytoplasm. This subunit acts as a catalytic chaperone that increases the ATP-binding affinity of the ATP-hydrolyzing subunit KdpB by the formation of a transient KdpB/KdpC/ATP ternary complex. This Bacillus cereus (strain Q1) protein is Potassium-transporting ATPase KdpC subunit.